A 154-amino-acid chain; its full sequence is Myoglobin (154 aa).

A Globin domain is found at 2 to 148 (GLSEAEWQLV…FRKDIAAKYK (147 aa)). Ser4 bears the Phosphoserine mark. Residue His65 participates in nitrite binding. His65 contributes to the O2 binding site. A Phosphothreonine modification is found at Thr68. His94 contacts heme b.

Belongs to the globin family. In terms of assembly, monomeric.

The protein resides in the cytoplasm. It localises to the sarcoplasm. It catalyses the reaction Fe(III)-heme b-[protein] + nitric oxide + H2O = Fe(II)-heme b-[protein] + nitrite + 2 H(+). The catalysed reaction is H2O2 + AH2 = A + 2 H2O. In terms of biological role, monomeric heme protein which primary function is to store oxygen and facilitate its diffusion within muscle tissues. Reversibly binds oxygen through a pentacoordinated heme iron and enables its timely and efficient release as needed during periods of heightened demand. Depending on the oxidative conditions of tissues and cells, and in addition to its ability to bind oxygen, it also has a nitrite reductase activity whereby it regulates the production of bioactive nitric oxide. Under stress conditions, like hypoxia and anoxia, it also protects cells against reactive oxygen species thanks to its pseudoperoxidase activity. The protein is Myoglobin (MB) of Mesoplodon carlhubbsi (Hubb's beaked whale).